The chain runs to 155 residues: Transcriptional repressor NrdR (155 aa).

The segment at 3–34 (CPFCAANDTKVIDSRLVAEGDQVRRRRECVAC) is a zinc-finger region. Residues 49 to 139 (PRLIKQDGSR…VYRRFQDLNE (91 aa)) form the ATP-cone domain.

It belongs to the NrdR family. Zn(2+) is required as a cofactor.

Its function is as follows. Negatively regulates transcription of bacterial ribonucleotide reductase nrd genes and operons by binding to NrdR-boxes. This is Transcriptional repressor NrdR from Ectopseudomonas mendocina (strain ymp) (Pseudomonas mendocina).